Consider the following 165-residue polypeptide: MPLNREDKQAVVAEVSAQVAKAQTVVLAEYRGIAVGDLTKLRAQAREQQVYLRVLKNTLARRAVEGTPFAPLAEQMTGPLIYGISEDAIAAAKVVNDFSKSNDKLVIKAGSFDGKVMDKAGVQALASIPSREELLSKLLFVMQSPVSSFARALAALAEKKQAEAA.

It belongs to the universal ribosomal protein uL10 family. As to quaternary structure, part of the ribosomal stalk of the 50S ribosomal subunit. The N-terminus interacts with L11 and the large rRNA to form the base of the stalk. The C-terminus forms an elongated spine to which L12 dimers bind in a sequential fashion forming a multimeric L10(L12)X complex.

In terms of biological role, forms part of the ribosomal stalk, playing a central role in the interaction of the ribosome with GTP-bound translation factors. In Burkholderia lata (strain ATCC 17760 / DSM 23089 / LMG 22485 / NCIMB 9086 / R18194 / 383), this protein is Large ribosomal subunit protein uL10.